We begin with the raw amino-acid sequence, 418 residues long: Glutamyl-tRNA reductase (418 aa).

Substrate contacts are provided by residues T49–R52, S109, E114–Q116, and Q120. The Nucleophile role is filled by C50. G189–I194 is a binding site for NADP(+).

Belongs to the glutamyl-tRNA reductase family. Homodimer.

It carries out the reaction (S)-4-amino-5-oxopentanoate + tRNA(Glu) + NADP(+) = L-glutamyl-tRNA(Glu) + NADPH + H(+). It functions in the pathway porphyrin-containing compound metabolism; protoporphyrin-IX biosynthesis; 5-aminolevulinate from L-glutamyl-tRNA(Glu): step 1/2. Catalyzes the NADPH-dependent reduction of glutamyl-tRNA(Glu) to glutamate 1-semialdehyde (GSA). The polypeptide is Glutamyl-tRNA reductase (Escherichia coli O1:K1 / APEC).